The primary structure comprises 529 residues: Glucose-6-phosphate isomerase (529 aa).

The active-site Proton donor is the Glu322. Catalysis depends on residues His351 and Lys455.

It belongs to the GPI family.

The protein localises to the cytoplasm. It catalyses the reaction alpha-D-glucose 6-phosphate = beta-D-fructose 6-phosphate. Its pathway is carbohydrate biosynthesis; gluconeogenesis. The protein operates within carbohydrate degradation; glycolysis; D-glyceraldehyde 3-phosphate and glycerone phosphate from D-glucose: step 2/4. Functionally, catalyzes the reversible isomerization of glucose-6-phosphate to fructose-6-phosphate. This is Glucose-6-phosphate isomerase from Thermosynechococcus vestitus (strain NIES-2133 / IAM M-273 / BP-1).